The primary structure comprises 499 residues: Glycerol kinase (499 aa).

T12 contacts ADP. Residues T12, T13, and S14 each contribute to the ATP site. T12 contacts sn-glycerol 3-phosphate. R16 contacts ADP. R82, E83, Y134, and D243 together coordinate sn-glycerol 3-phosphate. Glycerol contacts are provided by R82, E83, Y134, D243, and Q244. Positions 265 and 308 each coordinate ADP. Residues T265, G308, Q312, and G409 each contribute to the ATP site. Residues G409 and N413 each contribute to the ADP site.

It belongs to the FGGY kinase family. As to quaternary structure, homotetramer and homodimer (in equilibrium).

It carries out the reaction glycerol + ATP = sn-glycerol 3-phosphate + ADP + H(+). It functions in the pathway polyol metabolism; glycerol degradation via glycerol kinase pathway; sn-glycerol 3-phosphate from glycerol: step 1/1. Its activity is regulated as follows. Activated by phosphorylation and inhibited by fructose 1,6-bisphosphate (FBP). Key enzyme in the regulation of glycerol uptake and metabolism. Catalyzes the phosphorylation of glycerol to yield sn-glycerol 3-phosphate. This chain is Glycerol kinase, found in Lachnoclostridium phytofermentans (strain ATCC 700394 / DSM 18823 / ISDg) (Clostridium phytofermentans).